Here is a 290-residue protein sequence, read N- to C-terminus: LVSSGQLEFIDGGVQIDPFGHSAVQAYFEVNDNSLPVQDNVELFDYNVQERVNDFVAAALSQANITRVNALYSTPSIYTDAKYATNEYWPLKTDDFFPYADRFNSGPNTDSLADALAIAQHHDAVTGTEKLAIGYQEAEELVSSSLACVQDSDGLEIESQLLPQQKVSVPPLGFSTYTVLTAKYDETGQASGAYLFRPDGTWHGNAKLTVLDGPVLDEVHQQINPWIYQITRSVLVDRPLGGSSLQDGQIELYYRIDPLGEGAKWRRSFGQEIYSPLLLAFAEQDDQDEW.

Asp-17 acts as the Nucleophile in catalysis. Asn-64 is a glycosylation site (N-linked (GlcNAc...) asparagine).

Belongs to the glycosyl hydrolase 38 family. Dimer. The cofactor is Zn(2+).

It carries out the reaction Hydrolysis of terminal, non-reducing alpha-D-mannose residues in alpha-D-mannosides.. Inhibited by swainsonine but not by 1-desoxymannojirimycin. Its function is as follows. Liberates mannose from p-nitrophenyl-alpha-D-mannoside. This Lablab purpureus (Hyacinth bean) protein is Alpha-mannosidase.